Reading from the N-terminus, the 247-residue chain is Probable transcriptional regulatory protein Swit_2142 (247 aa).

Basic residues predominate over residues 1–14; sequence MAGHSKFKNIMHRK. The tract at residues 1–21 is disordered; it reads MAGHSKFKNIMHRKGAQDKKR.

This sequence belongs to the TACO1 family.

It is found in the cytoplasm. The polypeptide is Probable transcriptional regulatory protein Swit_2142 (Rhizorhabdus wittichii (strain DSM 6014 / CCUG 31198 / JCM 15750 / NBRC 105917 / EY 4224 / RW1) (Sphingomonas wittichii)).